We begin with the raw amino-acid sequence, 160 residues long: 2-C-methyl-D-erythritol 2,4-cyclodiphosphate synthase (160 aa).

A divalent metal cation is bound by residues Asp-11 and His-13. Residues 11–13 and 37–38 each bind 4-CDP-2-C-methyl-D-erythritol 2-phosphate; these read DVH and HS. A divalent metal cation is bound at residue His-45. Residues 59 to 61, 64 to 68, 103 to 109, 135 to 138, Phe-142, and Arg-145 each bind 4-CDP-2-C-methyl-D-erythritol 2-phosphate; these read DIG, FPDTD, AQAPKMA, and TTTE.

This sequence belongs to the IspF family. In terms of assembly, homotrimer. The cofactor is a divalent metal cation.

It catalyses the reaction 4-CDP-2-C-methyl-D-erythritol 2-phosphate = 2-C-methyl-D-erythritol 2,4-cyclic diphosphate + CMP. It participates in isoprenoid biosynthesis; isopentenyl diphosphate biosynthesis via DXP pathway; isopentenyl diphosphate from 1-deoxy-D-xylulose 5-phosphate: step 4/6. In terms of biological role, involved in the biosynthesis of isopentenyl diphosphate (IPP) and dimethylallyl diphosphate (DMAPP), two major building blocks of isoprenoid compounds. Catalyzes the conversion of 4-diphosphocytidyl-2-C-methyl-D-erythritol 2-phosphate (CDP-ME2P) to 2-C-methyl-D-erythritol 2,4-cyclodiphosphate (ME-CPP) with a corresponding release of cytidine 5-monophosphate (CMP). This chain is 2-C-methyl-D-erythritol 2,4-cyclodiphosphate synthase, found in Thiobacillus denitrificans (strain ATCC 25259 / T1).